Consider the following 144-residue polypeptide: Endoribonuclease YbeY (144 aa).

Zn(2+) contacts are provided by His-105, His-109, and Asp-115.

Belongs to the endoribonuclease YbeY family. The cofactor is Zn(2+).

The protein resides in the cytoplasm. Single strand-specific metallo-endoribonuclease involved in late-stage 70S ribosome quality control and in maturation of the 3' terminus of the 16S rRNA. The sequence is that of Endoribonuclease YbeY from Chlorobium limicola (strain DSM 245 / NBRC 103803 / 6330).